A 429-amino-acid polypeptide reads, in one-letter code: Cytochrome P450 BJ-3 (429 aa).

Cysteine 376 lines the heme pocket.

This sequence belongs to the cytochrome P450 family. Heme is required as a cofactor.

Functionally, cytochromes P450 are a group of heme-thiolate monooxygenases. They oxidize a variety of structurally unrelated compounds, including steroids, fatty acids, and xenobiotics. The chain is Cytochrome P450 BJ-3 (cyp114) from Bradyrhizobium diazoefficiens (strain JCM 10833 / BCRC 13528 / IAM 13628 / NBRC 14792 / USDA 110).